Here is a 262-residue protein sequence, read N- to C-terminus: Pyridoxine 5'-phosphate synthase (262 aa).

N6 contributes to the 3-amino-2-oxopropyl phosphate binding site. Position 8 to 9 (D8 to H9) interacts with 1-deoxy-D-xylulose 5-phosphate. A 3-amino-2-oxopropyl phosphate-binding site is contributed by R17. The active-site Proton acceptor is H43. Residues R45 and H50 each coordinate 1-deoxy-D-xylulose 5-phosphate. E70 functions as the Proton acceptor in the catalytic mechanism. T102 is a 1-deoxy-D-xylulose 5-phosphate binding site. The Proton donor role is filled by H215. 3-amino-2-oxopropyl phosphate-binding positions include G216 and G237 to H238.

This sequence belongs to the PNP synthase family. Homooctamer; tetramer of dimers.

The protein localises to the cytoplasm. It catalyses the reaction 3-amino-2-oxopropyl phosphate + 1-deoxy-D-xylulose 5-phosphate = pyridoxine 5'-phosphate + phosphate + 2 H2O + H(+). It participates in cofactor biosynthesis; pyridoxine 5'-phosphate biosynthesis; pyridoxine 5'-phosphate from D-erythrose 4-phosphate: step 5/5. Its function is as follows. Catalyzes the complicated ring closure reaction between the two acyclic compounds 1-deoxy-D-xylulose-5-phosphate (DXP) and 3-amino-2-oxopropyl phosphate (1-amino-acetone-3-phosphate or AAP) to form pyridoxine 5'-phosphate (PNP) and inorganic phosphate. The sequence is that of Pyridoxine 5'-phosphate synthase from Helicobacter pylori (strain J99 / ATCC 700824) (Campylobacter pylori J99).